The following is a 272-amino-acid chain: 1,4-dihydroxy-2-naphthoyl-CoA synthase (272 aa).

Substrate contacts are provided by residues arginine 33, 72-76, tyrosine 84, 116-120, threonine 142, serine 148, tyrosine 245, and lysine 260; these read SGGDQ and YAIGG. 141 to 143 is a binding site for hydrogencarbonate; it reads QTG. Basic and acidic residues predominate over residues 253 to 264; sequence GRDAFKEKRDPD. Residues 253–272 form a disordered region; the sequence is GRDAFKEKRDPDFDQFPKFP.

This sequence belongs to the enoyl-CoA hydratase/isomerase family. MenB subfamily. Requires hydrogencarbonate as cofactor.

The enzyme catalyses 2-succinylbenzoyl-CoA + H(+) = 1,4-dihydroxy-2-naphthoyl-CoA + H2O. It participates in quinol/quinone metabolism; 1,4-dihydroxy-2-naphthoate biosynthesis; 1,4-dihydroxy-2-naphthoate from chorismate: step 6/7. The protein operates within quinol/quinone metabolism; menaquinone biosynthesis. Functionally, converts o-succinylbenzoyl-CoA (OSB-CoA) to 1,4-dihydroxy-2-naphthoyl-CoA (DHNA-CoA). The protein is 1,4-dihydroxy-2-naphthoyl-CoA synthase of Staphylococcus saprophyticus subsp. saprophyticus (strain ATCC 15305 / DSM 20229 / NCIMB 8711 / NCTC 7292 / S-41).